Reading from the N-terminus, the 142-residue chain is Fluoride-specific ion channel FluC 1 (142 aa).

4 helical membrane passes run 23–43 (VNIA…YLID), 54–74 (LPLG…GLIG), 79–99 (GWLL…FSTF), and 116–136 (LGNV…AVSL). Residues glycine 91 and threonine 94 each coordinate Na(+).

Belongs to the fluoride channel Fluc/FEX (TC 1.A.43) family.

Its subcellular location is the cell membrane. It catalyses the reaction fluoride(in) = fluoride(out). Na(+) is not transported, but it plays an essential structural role and its presence is essential for fluoride channel function. Fluoride-specific ion channel. Important for reducing fluoride concentration in the cell, thus reducing its toxicity. The polypeptide is Fluoride-specific ion channel FluC 1 (Nocardia farcinica (strain IFM 10152)).